Here is a 346-residue protein sequence, read N- to C-terminus: MAVYAVTGGAGFLGRYIVKLLISADDVQEIRVIDIVEDPQPITSKVKVINYIQCDINDFDKVREALDGVNLIIHTAALVDVFGKYTDNEIMKVNYYGTQTILAACVDLGIKYLIYTSSMEAIGPNKHGDPFIGHEHTLYDISPGHVYAKSKRMAEQLVMKANNSVIMNGAKLYTCCLRPTGIYGEGDKLTKVFYEQCKQHGNIMYRTVDDNAVHSRVYVGNAAWMHVLAAKYIQYPGSKIKGNAYFCYDYSPSCSYDMFNLLLMKPLGIEQGSRIPRWMLKMYACKNDMKRILFRKPSLLNNYTLKISNTTFEVRTNNAELDFNYSPIFDVDVAFKRTRKWLEESE.

Y147 serves as the catalytic Proton acceptor. K151 is a binding site for NAD(+).

The protein belongs to the 3-beta-HSD family.

It carries out the reaction a 3beta-hydroxy-Delta(5)-steroid + NAD(+) = a 3-oxo-Delta(5)-steroid + NADH + H(+). The enzyme catalyses a 3-oxo-Delta(5)-steroid = a 3-oxo-Delta(4)-steroid. It functions in the pathway lipid metabolism; steroid biosynthesis. In terms of biological role, catalyzes the oxidative conversion of Delta(5)-ene-3-beta-hydroxy steroid, and the oxidative conversion of ketosteroids. The 3-beta-HSD enzymatic system plays a crucial role in the biosynthesis of all classes of hormonal steroids. During viral infection, steroid production contributes to virulence by inhibiting the host inflammatory response. This is 3 beta-hydroxysteroid dehydrogenase/Delta 5--&gt;4-isomerase (OPG174) from Homo sapiens (Human).